The sequence spans 236 residues: 27 kDa hemolymph protein (236 aa).

A signal peptide spans 1 to 17 (MMWKLIIVTILAVGVLC).

Monomer. As to expression, hemolymph.

It localises to the secreted. This chain is 27 kDa hemolymph protein, found in Galleria mellonella (Greater wax moth).